A 215-amino-acid chain; its full sequence is Imidazole glycerol phosphate synthase subunit HisH (215 aa).

The 207-residue stretch at 9-215 (EVVLVDYGLG…QNFVDYCLER (207 aa)) folds into the Glutamine amidotransferase type-1 domain. Cys85 acts as the Nucleophile in catalysis. Residues His193 and Glu195 contribute to the active site.

Heterodimer of HisH and HisF.

It is found in the cytoplasm. The catalysed reaction is 5-[(5-phospho-1-deoxy-D-ribulos-1-ylimino)methylamino]-1-(5-phospho-beta-D-ribosyl)imidazole-4-carboxamide + L-glutamine = D-erythro-1-(imidazol-4-yl)glycerol 3-phosphate + 5-amino-1-(5-phospho-beta-D-ribosyl)imidazole-4-carboxamide + L-glutamate + H(+). The enzyme catalyses L-glutamine + H2O = L-glutamate + NH4(+). It functions in the pathway amino-acid biosynthesis; L-histidine biosynthesis; L-histidine from 5-phospho-alpha-D-ribose 1-diphosphate: step 5/9. Its function is as follows. IGPS catalyzes the conversion of PRFAR and glutamine to IGP, AICAR and glutamate. The HisH subunit catalyzes the hydrolysis of glutamine to glutamate and ammonia as part of the synthesis of IGP and AICAR. The resulting ammonia molecule is channeled to the active site of HisF. The polypeptide is Imidazole glycerol phosphate synthase subunit HisH (Natronomonas pharaonis (strain ATCC 35678 / DSM 2160 / CIP 103997 / JCM 8858 / NBRC 14720 / NCIMB 2260 / Gabara) (Halobacterium pharaonis)).